A 484-amino-acid polypeptide reads, in one-letter code: Replication factor C large subunit (484 aa).

46 to 53 is an ATP binding site; that stretch reads GPPGSGKT. Composition is skewed to basic and acidic residues over residues 419-432, 442-451, and 459-478; these read VKTETPKKKEKTKE, RISEPPEPLK, and KSVEKADTKEKEKKDPKKQA. The tract at residues 419–484 is disordered; it reads VKTETPKKKE…KKQATLDSFF (66 aa).

It belongs to the activator 1 small subunits family. RfcL subfamily. In terms of assembly, heteromultimer composed of small subunits (RfcS) and large subunits (RfcL).

Part of the RFC clamp loader complex which loads the PCNA sliding clamp onto DNA. The chain is Replication factor C large subunit from Methanococcus maripaludis (strain C5 / ATCC BAA-1333).